The primary structure comprises 686 residues: MAIDRRREAAGGGPGRQPAPAEENGSLPPGDAAASAPLGGRAGPGGGAEIQPLPPLHPGGGPHPSCCSAAAAPSLLLLDYDGSVLPFLGGLGGGYQKTLVLLTWIPALFIGFSQFSDSFLLDQPNFWCRGAGKGTELAGVTTTGRGGDMGNWTSLPTTPFATAPWEAAGNRSNSSGADGGDTPPLPSPPDKGDNASNCDCRAWDYGIRAGLVQNVVSKWDLVCDNAWKVHIAKFSLLVGLIFGYLITGCIADWVGRRPVLLFSIIFILIFGLTVALSVNVTMFSTLRFFEGFCLAGIILTLYALRIELCPPGKRFMITMVASFVAMAGQFLMPGLAALCRDWQVLQALIICPFLLMLLYWSIFPESLRWLMATQQFESAKRLILHFTQKNRMNPEGDIKGVIPELEKELSRRPKKVCIVKVVGTRNLWKNIVVLCVNSLTGYGIHHCFARSMMGHEVKVPLLENFYADYYTTASIALVSCLAMCVVVRFLGRRGGLLLFMILTALASLLQLGLLNLIGKYSQHPDSGMSDSVKDKFSIAFSIVGMFASHAVGSLSVFFCAEITPTVIRCGGLGLVLASAGFGMLTAPIIELHNQKGYFLHHIIFACCTLICIICILLLPESRDQNLPENISNGEHYTRQPLLPHKKGEQPLLLTNAELKDYSGLHDAAAAGDTLPEGATANGMKAM.

2 disordered regions span residues 1 to 62 and 169 to 193; these read MAID…GGGP and GNRS…DKGD. N-linked (GlcNAc...) asparagine glycosylation is present at asparagine 24. 2 helical membrane-spanning segments follow: residues 234–254 and 258–278; these read FSLL…ADWV and PVLL…ALSV. Asparagine 279 carries an N-linked (GlcNAc...) asparagine glycan. 8 helical membrane passes run 288 to 308, 315 to 335, 344 to 364, 467 to 487, 494 to 514, 538 to 558, 569 to 589, and 598 to 618; these read FFEG…RIEL, FMIT…MPGL, VLQA…SIFP, ADYY…CVVV, GGLL…LGLL, IAFS…SVFF, CGGL…APII, and FLHH…ILLL.

The protein belongs to the major facilitator (TC 2.A.1) superfamily. Organic cation transporter (TC 2.A.1.19) family.

The protein resides in the membrane. This Homo sapiens (Human) protein is Solute carrier family 22 member 23 (SLC22A23).